A 183-amino-acid chain; its full sequence is Somatotropin (183 aa).

Residue H19 coordinates Zn(2+). The segment at 38 to 67 (EEQRHSHKSSPSAFCQSETIPAPTGKEDAQ) is disordered. Positions 46-56 (SSPSAFCQSET) are enriched in polar residues. A disulfide bridge links C52 with C156. E165 contacts Zn(2+). C173 and C181 are disulfide-bonded.

It belongs to the somatotropin/prolactin family.

Its subcellular location is the secreted. Its function is as follows. Growth hormone plays an important role in growth control and is involved in the regulation of several anabolic processes. Implicated as an osmoregulatory substance important for seawater adaptation. The chain is Somatotropin (gh) from Prionace glauca (Blue shark).